The primary structure comprises 994 residues: MTGLYSSMSFFLRTIVLLFSTSSFCNTFASLTQDSCHPDQRDALLEFKNEFKIWYPNGFLDIDGVLMDVTSYPKTKSWTKNSDCCYWDGITCDTKSGKVTGLDLSCSCLHGRLEPNSSLFRLQHLQSVNLAYNNFTNSPIPAEFSKFMRLERLNLSRSSFSGHISIKLLQLTNLVSLDLSSSFPYSPSSLSIEKPLFLHLLALNFMNLRELDMSSVDISSAIPIEFSYMWSLRSLTLKGCNLLGRFPNSVLLIPNLESISLDHNLNLEGSLPNFLRNNSLLKLSIYNTSFSGTIPNSISNLKHLTSLKLQQSAFSGRIPSSLRSLSHLSNLVLSENNFVGEIPSSVSNLKQLTLFDVSDNNLNGNFPSSLLNLNQLRYIDICSNHFTGFLPPTISQLSNLEFFSACDNSFTGSIPSSLFNISSLTTLGLSYNQLNDTTNIKNISLLHNLQRLLLDNNNFKASQVDLDVFLSLKRLVSLALSGIPLSTTNITSDSEFSSHLEYLELSGCNIIEFPEFIRNQRNLSSIDLSNNNIKGQVPNWLWRLPELSTVDLSNNSLIGFNGSLKALSGSKIVMLDLSSNAFQGPLFMPPRGIQYFLGSYNNFTGYIPPSICGLANPLILDLSNNNLHGLIPRCLEAQMSSLSVLNLRNNSLDGSLPNIFMNAKVLSSLDVSHNTLEGKLPASLAGCSALEILNVESNNINDTFPFWLNSLPKLQVLVLRSNNFRGTLHNVDGVWFGFPLLRITDVSHNDFVGTLPSDYFMNWTAISKSETELQYIGDPEDYGYYTSLVLMNKGVSMEMQRILTKYTVIDFAGNKIQGKIPESVGILKELHVLNLSSNAFTGHIPSSLANLTNLESLDISQNKIGGEIPPELGTLSSLEWINVSHNQLVGSIPQGTQFHRQNCSSYEGNPGIYGSSLKDVCGDIHAPRPPQAVLPHSSSSSSEEDELISWIAACLGFAPGMVFGLTMGYIMTSHKHEWFMDTFGRRKGRSTRTR.

Residues 1–25 (MTGLYSSMSFFLRTIVLLFSTSSFC) form the signal peptide. Topologically, residues 26 to 946 (NTFASLTQDS…SSSSSSEEDE (921 aa)) are extracellular. Asn116, Asn134, and Asn154 each carry an N-linked (GlcNAc...) asparagine glycan. LRR repeat units follow at residues 122–146 (LQHL…EFSK), 148–171 (MRLE…LLQL), 174–199 (LVSL…LFLH), 205–228 (FMNL…EFSY), 230–253 (WSLR…VLLI), 254–278 (PNLE…LRNN), 280–301 (LLKL…ISNL), 302–325 (KHLT…LRSL), 326–349 (SHLS…VSNL), 350–373 (KQLT…LLNL), 375–397 (QLRY…ISQL), 398–421 (SNLE…LFNI), 423–445 (SLTT…NISL), 446–471 (LHNL…VFLS), 477–497 (SLAL…SEFS), 498–520 (SHLE…IRNQ), 521–544 (RNLS…LWRL), 546–569 (ELST…ALSG), and 571–595 (KIVM…GIQY). N-linked (GlcNAc...) asparagine glycans are attached at residues Asn277 and Asn287. N-linked (GlcNAc...) asparagine glycosylation is found at Asn420, Asn435, and Asn442. Residue Asn489 is glycosylated (N-linked (GlcNAc...) asparagine). N-linked (GlcNAc...) asparagine glycans are attached at residues Asn522, Asn554, and Asn561. Residues 597-613 (LGSYNNFTGYIPPSICG) form an LRR 20; degenerate repeat. Asn602 is a glycosylation site (N-linked (GlcNAc...) asparagine). 10 LRR repeats span residues 614-637 (LANP…CLEA), 639-663 (MSSL…FMNA), 665-687 (VLSS…LAGC), 689-710 (ALEI…WLNS), 711-737 (LPKL…VWFG), 739-762 (PLLR…YFMN), 803-827 (LTKY…VGIL), 828-851 (KELH…LANL), 852-875 (TNLE…LGTL), and 877-900 (SLEW…QFHR). N-linked (GlcNAc...) asparagine glycosylation occurs at Asn649. The N-linked (GlcNAc...) asparagine glycan is linked to Asn701. A glycan (N-linked (GlcNAc...) asparagine) is linked at Asn762. Asn834 and Asn850 each carry an N-linked (GlcNAc...) asparagine glycan. N-linked (GlcNAc...) asparagine glycosylation is found at Asn882 and Asn902. Residues 947–967 (LISWIAACLGFAPGMVFGLTM) form a helical membrane-spanning segment. Over 968–994 (GYIMTSHKHEWFMDTFGRRKGRSTRTR) the chain is Cytoplasmic.

The protein belongs to the RLP family.

Its subcellular location is the cell membrane. The chain is Receptor-like protein 6 from Arabidopsis thaliana (Mouse-ear cress).